Here is a 468-residue protein sequence, read N- to C-terminus: Phenylalanine--tRNA ligase alpha subunit (468 aa).

L-phenylalanine-binding positions include threonine 311, 350-352, and phenylalanine 390; that span reads QLD. Glutamate 392 contacts Mg(2+).

It belongs to the class-II aminoacyl-tRNA synthetase family. Phe-tRNA synthetase alpha subunit type 2 subfamily. Tetramer of two alpha and two beta subunits. The cofactor is Mg(2+).

The protein resides in the cytoplasm. The catalysed reaction is tRNA(Phe) + L-phenylalanine + ATP = L-phenylalanyl-tRNA(Phe) + AMP + diphosphate + H(+). The polypeptide is Phenylalanine--tRNA ligase alpha subunit (Saccharolobus solfataricus (strain ATCC 35092 / DSM 1617 / JCM 11322 / P2) (Sulfolobus solfataricus)).